The following is a 365-amino-acid chain: Holliday junction branch migration complex subunit RuvB (365 aa).

The interval 1–191 (MSPELGGGYD…FGFTAHMDFY (191 aa)) is large ATPase domain (RuvB-L). ATP-binding positions include leucine 30, arginine 31, glycine 72, lysine 75, threonine 76, serine 77, 138–140 (EDF), arginine 181, tyrosine 191, and arginine 228. Threonine 76 contributes to the Mg(2+) binding site. Residues 192–262 (EPAELKQILM…IAHAALAVYD (71 aa)) are small ATPAse domain (RuvB-S). Positions 265–365 (QLGLDRLDRS…QASLFDPEDP (101 aa)) are head domain (RuvB-H). Arginine 320 and arginine 325 together coordinate DNA.

The protein belongs to the RuvB family. Homohexamer. Forms an RuvA(8)-RuvB(12)-Holliday junction (HJ) complex. HJ DNA is sandwiched between 2 RuvA tetramers; dsDNA enters through RuvA and exits via RuvB. An RuvB hexamer assembles on each DNA strand where it exits the tetramer. Each RuvB hexamer is contacted by two RuvA subunits (via domain III) on 2 adjacent RuvB subunits; this complex drives branch migration. In the full resolvosome a probable DNA-RuvA(4)-RuvB(12)-RuvC(2) complex forms which resolves the HJ.

It localises to the cytoplasm. It carries out the reaction ATP + H2O = ADP + phosphate + H(+). Its function is as follows. The RuvA-RuvB-RuvC complex processes Holliday junction (HJ) DNA during genetic recombination and DNA repair, while the RuvA-RuvB complex plays an important role in the rescue of blocked DNA replication forks via replication fork reversal (RFR). RuvA specifically binds to HJ cruciform DNA, conferring on it an open structure. The RuvB hexamer acts as an ATP-dependent pump, pulling dsDNA into and through the RuvAB complex. RuvB forms 2 homohexamers on either side of HJ DNA bound by 1 or 2 RuvA tetramers; 4 subunits per hexamer contact DNA at a time. Coordinated motions by a converter formed by DNA-disengaged RuvB subunits stimulates ATP hydrolysis and nucleotide exchange. Immobilization of the converter enables RuvB to convert the ATP-contained energy into a lever motion, pulling 2 nucleotides of DNA out of the RuvA tetramer per ATP hydrolyzed, thus driving DNA branch migration. The RuvB motors rotate together with the DNA substrate, which together with the progressing nucleotide cycle form the mechanistic basis for DNA recombination by continuous HJ branch migration. Branch migration allows RuvC to scan DNA until it finds its consensus sequence, where it cleaves and resolves cruciform DNA. The protein is Holliday junction branch migration complex subunit RuvB of Rhodococcus opacus (strain B4).